The primary structure comprises 211 residues: Uridine kinase (211 aa).

13–20 (GGTASGKT) serves as a coordination point for ATP.

This sequence belongs to the uridine kinase family.

It localises to the cytoplasm. It carries out the reaction uridine + ATP = UMP + ADP + H(+). The catalysed reaction is cytidine + ATP = CMP + ADP + H(+). The protein operates within pyrimidine metabolism; CTP biosynthesis via salvage pathway; CTP from cytidine: step 1/3. It functions in the pathway pyrimidine metabolism; UMP biosynthesis via salvage pathway; UMP from uridine: step 1/1. This Thermus thermophilus (strain ATCC BAA-163 / DSM 7039 / HB27) protein is Uridine kinase.